The primary structure comprises 303 residues: MTRTDQDSWDLASSVGATATMVAAARALASTGERPIINDPFAAPLVRAVGLDFFRRLVDGEVAPADPQRGERDLQLETDSIAVRTRFFDDFFTGAARDGIRQSVILAAGLDARAYRLDWPAGAVVYEVDQPKVVEFKTNTMAALDARPAAQLRTVSIDLREDWPEALRANGFDVTQATSWSAEGLLMYLPPEAQDRLFDNITALSAPGSRLATEYHPDATGTTMAQRAQEFNDRWARVGCDIDLSGLFFDGERSNVVEYLTGRGWRVSARPRRDLFDDYGLAYPEDDETAQFPNIVAVSAELG.

S-adenosyl-L-methionine-binding positions include aspartate 129 and 158–159 (DL).

Belongs to the UPF0677 family.

Its function is as follows. Exhibits S-adenosyl-L-methionine-dependent methyltransferase activity. This is Putative S-adenosyl-L-methionine-dependent methyltransferase MAV_4435 from Mycobacterium avium (strain 104).